The chain runs to 701 residues: DNA ligase (701 aa).

Residues 43–47, 92–93, and E126 contribute to the NAD(+) site; these read DAAYD and SL. The active-site N6-AMP-lysine intermediate is the K128. The NAD(+) site is built by R149, E186, K302, and K326. Residues C420, C423, C444, and C450 each contribute to the Zn(2+) site. The region spanning 623–701 is the BRCT domain; it reads ANDSPVAGKT…EDEWFDLIGA (79 aa).

This sequence belongs to the NAD-dependent DNA ligase family. LigA subfamily. Mg(2+) serves as cofactor. The cofactor is Mn(2+).

It catalyses the reaction NAD(+) + (deoxyribonucleotide)n-3'-hydroxyl + 5'-phospho-(deoxyribonucleotide)m = (deoxyribonucleotide)n+m + AMP + beta-nicotinamide D-nucleotide.. Its function is as follows. DNA ligase that catalyzes the formation of phosphodiester linkages between 5'-phosphoryl and 3'-hydroxyl groups in double-stranded DNA using NAD as a coenzyme and as the energy source for the reaction. It is essential for DNA replication and repair of damaged DNA. The protein is DNA ligase of Maricaulis maris (strain MCS10) (Caulobacter maris).